Reading from the N-terminus, the 397-residue chain is Tryptophan synthase beta chain (397 aa).

At K91 the chain carries N6-(pyridoxal phosphate)lysine.

This sequence belongs to the TrpB family. Tetramer of two alpha and two beta chains. Requires pyridoxal 5'-phosphate as cofactor.

The enzyme catalyses (1S,2R)-1-C-(indol-3-yl)glycerol 3-phosphate + L-serine = D-glyceraldehyde 3-phosphate + L-tryptophan + H2O. It functions in the pathway amino-acid biosynthesis; L-tryptophan biosynthesis; L-tryptophan from chorismate: step 5/5. In terms of biological role, the beta subunit is responsible for the synthesis of L-tryptophan from indole and L-serine. This is Tryptophan synthase beta chain from Bacillus cereus (strain ZK / E33L).